The following is a 179-amino-acid chain: NADH dehydrogenase [ubiquinone] 1 beta subcomplex subunit 9 (179 aa).

An N-acetylalanine modification is found at alanine 2. Serine 85 carries the phosphoserine modification.

This sequence belongs to the complex I LYR family. In terms of assembly, mammalian complex I is composed of 45 different subunits.

The protein resides in the mitochondrion inner membrane. In terms of biological role, accessory subunit of the mitochondrial membrane respiratory chain NADH dehydrogenase (Complex I), that is believed to be not involved in catalysis. Complex I functions in the transfer of electrons from NADH to the respiratory chain. The immediate electron acceptor for the enzyme is believed to be ubiquinone. This Mus musculus (Mouse) protein is NADH dehydrogenase [ubiquinone] 1 beta subcomplex subunit 9 (Ndufb9).